The primary structure comprises 338 residues: Large ribosomal subunit protein uL3 (338 aa).

The tract at residues 1-37 (MPQPSRPRKGSMGFSPRKRAESEVPRIRSWASNDGAP) is disordered.

It belongs to the universal ribosomal protein uL3 family. Part of the 50S ribosomal subunit. Forms a cluster with proteins L14 and L24e.

Its function is as follows. One of the primary rRNA binding proteins, it binds directly near the 3'-end of the 23S rRNA, where it nucleates assembly of the 50S subunit. This is Large ribosomal subunit protein uL3 from Haloquadratum walsbyi (strain DSM 16790 / HBSQ001).